A 376-amino-acid chain; its full sequence is Methylthioribose-1-phosphate isomerase (376 aa).

Asp256 functions as the Proton donor in the catalytic mechanism.

This sequence belongs to the eIF-2B alpha/beta/delta subunits family. MtnA subfamily.

The protein localises to the cytoplasm. It is found in the nucleus. The catalysed reaction is 5-(methylsulfanyl)-alpha-D-ribose 1-phosphate = 5-(methylsulfanyl)-D-ribulose 1-phosphate. It functions in the pathway amino-acid biosynthesis; L-methionine biosynthesis via salvage pathway; L-methionine from S-methyl-5-thio-alpha-D-ribose 1-phosphate: step 1/6. Its function is as follows. Catalyzes the interconversion of methylthioribose-1-phosphate (MTR-1-P) into methylthioribulose-1-phosphate (MTRu-1-P). This is Methylthioribose-1-phosphate isomerase from Vitis vinifera (Grape).